A 62-amino-acid polypeptide reads, in one-letter code: Probable tautomerase RSc0807 (62 aa).

Proline 2 acts as the Proton acceptor; via imino nitrogen in catalysis.

Belongs to the 4-oxalocrotonate tautomerase family.

This Ralstonia nicotianae (strain ATCC BAA-1114 / GMI1000) (Ralstonia solanacearum) protein is Probable tautomerase RSc0807.